The primary structure comprises 391 residues: E1B 55 kDa protein (391 aa).

The residue at position 387 (Ser-387) is a Phosphoserine.

The protein belongs to the adenoviridae E1B 55 kDa protein family. As to quaternary structure, interacts with host PML-4 and PML-5; this interaction promotes efficient subnuclear targeting of E1B-55K to PML nuclear bodies. Interacts with E4-ORF3 protein. Interacts with E4-ORF6 protein.

The protein resides in the host nucleus. It localises to the host cytoplasm. Functionally, plays a major role to prevent cellular inhibition of viral genome replication. Assembles an SCF-like E3 ubiquitin ligase complex based on the cellular proteins ELOB, ELOC, CUL5 and RBX1, in cooperation with viral E4orf6. This viral RING-type ligase ubiquitinates cellular substrates and targets them to proteasomal degradation: TP53/p53, LIG4, MRE11-RAD50-NBS1 (MRN) complex, ITGA3, DAXX and BLM. E1B-55K probably acts as the substrate-specific adapter of the SCF-like E3 ubiquitin ligase complex. Degradation of host TP53/p53 activity is essential for preventing E1A-induced TP53 accumulation that would otherwise lead to cell apoptosis and growth arrest. E1B-55K also inactivates TP53 transcription-factor activity by binding its transactivation domain. E1B-55K also functions as a SUMO1 E3 ligase for TP53 which causes the latter to be sequestered in promyelocytic leukemia (PML) nuclear bodies thereby contributing to maximal inhibition of TP53 function. This is E1B 55 kDa protein from Tree shrew adenovirus serotype 1 (TSAdV-1).